Here is a 547-residue protein sequence, read N- to C-terminus: CTP synthase (547 aa).

Positions 1–265 are amidoligase domain; that stretch reads MARYVFITGG…DQAVLDAFGI (265 aa). Serine 13 contacts CTP. Serine 13 is a UTP binding site. Residues 14–19 and aspartate 71 each bind ATP; that span reads SLGKGL. Mg(2+) is bound by residues aspartate 71 and glutamate 139. CTP-binding positions include 146 to 148, 186 to 191, and lysine 222; these read DIE and KTKPTQ. UTP is bound by residues 186-191 and lysine 222; that span reads KTKPTQ. Positions 291–546 constitute a Glutamine amidotransferase type-1 domain; the sequence is RVAIVGKYTQ…IRAAVEVSRL (256 aa). Glycine 353 is an L-glutamine binding site. Catalysis depends on cysteine 380, which acts as the Nucleophile; for glutamine hydrolysis. L-glutamine-binding positions include 381 to 384, glutamate 404, and arginine 474; that span reads LGMQ. Active-site residues include histidine 519 and glutamate 521.

The protein belongs to the CTP synthase family. Homotetramer.

It carries out the reaction UTP + L-glutamine + ATP + H2O = CTP + L-glutamate + ADP + phosphate + 2 H(+). The enzyme catalyses L-glutamine + H2O = L-glutamate + NH4(+). The catalysed reaction is UTP + NH4(+) + ATP = CTP + ADP + phosphate + 2 H(+). It functions in the pathway pyrimidine metabolism; CTP biosynthesis via de novo pathway; CTP from UDP: step 2/2. Allosterically activated by GTP, when glutamine is the substrate; GTP has no effect on the reaction when ammonia is the substrate. The allosteric effector GTP functions by stabilizing the protein conformation that binds the tetrahedral intermediate(s) formed during glutamine hydrolysis. Inhibited by the product CTP, via allosteric rather than competitive inhibition. Its function is as follows. Catalyzes the ATP-dependent amination of UTP to CTP with either L-glutamine or ammonia as the source of nitrogen. Regulates intracellular CTP levels through interactions with the four ribonucleotide triphosphates. The sequence is that of CTP synthase from Cereibacter sphaeroides (strain ATCC 17025 / ATH 2.4.3) (Rhodobacter sphaeroides).